The sequence spans 359 residues: Alanine racemase, biosynthetic (359 aa).

The active-site Proton acceptor; specific for D-alanine is the Lys34. The residue at position 34 (Lys34) is an N6-(pyridoxal phosphate)lysine. Lys122 is modified (N6-carboxylysine). Arg129 is a substrate binding site. The active-site Proton acceptor; specific for L-alanine is Tyr255. A substrate-binding site is contributed by Met303.

The protein belongs to the alanine racemase family. Homodimer. Pyridoxal 5'-phosphate serves as cofactor.

The enzyme catalyses L-alanine = D-alanine. Its pathway is amino-acid biosynthesis; D-alanine biosynthesis; D-alanine from L-alanine: step 1/1. It participates in cell wall biogenesis; peptidoglycan biosynthesis. Its function is as follows. Catalyzes the interconversion of L-alanine and D-alanine. Provides the D-alanine required for cell wall biosynthesis. The chain is Alanine racemase, biosynthetic from Escherichia coli (strain K12).